Consider the following 373-residue polypeptide: Putative ribosome biogenesis protein C8F11.04 (373 aa).

A disordered region spans residues 265 to 373 (RKVVTKETAS…VKAGKNKVKH (109 aa)). Positions 292–320 (KVEVAKESKDSKQQNVSDKKQVTVKEVPK) are enriched in basic and acidic residues. Positions 347-359 (KVSQSSLKANGTT) are enriched in polar residues. The span at 362 to 373 (KKVKAGKNKVKH) shows a compositional bias: basic residues.

It belongs to the universal ribosomal protein uL1 family. Highly divergent. In terms of assembly, component of the 90S pre-ribosomes.

Its subcellular location is the nucleus. The protein resides in the nucleolus. Its function is as follows. Involved in rRNA-processing and ribosome biosynthesis. This Schizosaccharomyces pombe (strain 972 / ATCC 24843) (Fission yeast) protein is Putative ribosome biogenesis protein C8F11.04.